The following is a 392-amino-acid chain: Heavy metal-associated isoprenylated plant protein 6 (392 aa).

Basic and acidic residues predominate over residues 1 to 19 (MGEKKEETATKPQGEKKPT). A disordered region spans residues 1 to 22 (MGEKKEETATKPQGEKKPTDGG). The region spanning 23 to 86 (ITTVVMKLDM…KVADKIKRPV (64 aa)) is the HMA 1 domain. Cd(2+) contacts are provided by cysteine 34 and cysteine 37. The tract at residues 89 to 157 (VSTVAPPKKE…PPPPKESTVV (69 aa)) is disordered. The segment covering 106–145 (AEKKPSPAAEEKPAEKKPAAVEKPGEKKEEKKKEEGEKKA) has biased composition (basic and acidic residues). Positions 153 to 216 (ESTVVLKTKL…YLNEKLKRTV (64 aa)) constitute an HMA 2 domain. Cd(2+) is bound by residues cysteine 164 and cysteine 167. The segment covering 258–270 (KKVDGGGEKKKEV) has biased composition (basic and acidic residues). Disordered regions lie at residues 258-285 (KKVDGGGEKKKEVAVGGGGGGGGGGGDG) and 350-392 (GQGY…CSVM). The segment covering 272-285 (VGGGGGGGGGGGDG) has biased composition (gly residues). Cysteine 389 bears the Cysteine methyl ester mark. A lipid anchor (S-farnesyl cysteine) is attached at cysteine 389. Residues 390–392 (SVM) constitute a propeptide, removed in mature form.

It belongs to the HIPP family. In terms of tissue distribution, expressed in petioles, hypocotyls, peduncles, vascular bundles and root meristems.

The protein localises to the cell membrane. Functionally, heavy-metal-binding protein. Involved in the maintenance of heavy metal homeostasis and/or in detoxification. The polypeptide is Heavy metal-associated isoprenylated plant protein 6 (Arabidopsis thaliana (Mouse-ear cress)).